Here is a 72-residue protein sequence, read N- to C-terminus: DNA gyrase inhibitor YacG (72 aa).

Zn(2+)-binding residues include Cys-14, Cys-17, Cys-33, and Cys-37.

Belongs to the DNA gyrase inhibitor YacG family. Interacts with GyrB. It depends on Zn(2+) as a cofactor.

Functionally, inhibits all the catalytic activities of DNA gyrase by preventing its interaction with DNA. Acts by binding directly to the C-terminal domain of GyrB, which probably disrupts DNA binding by the gyrase. The sequence is that of DNA gyrase inhibitor YacG from Mannheimia succiniciproducens (strain KCTC 0769BP / MBEL55E).